We begin with the raw amino-acid sequence, 172 residues long: Orotate phosphoribosyltransferase (172 aa).

5-phospho-alpha-D-ribose 1-diphosphate is bound by residues Arg88, Lys89, Lys92, His94, and 113 to 121 (EDVTTSGGS). Orotate-binding residues include Thr117 and Arg145.

It belongs to the purine/pyrimidine phosphoribosyltransferase family. PyrE subfamily. Homodimer. Requires Mg(2+) as cofactor.

The catalysed reaction is orotidine 5'-phosphate + diphosphate = orotate + 5-phospho-alpha-D-ribose 1-diphosphate. Its pathway is pyrimidine metabolism; UMP biosynthesis via de novo pathway; UMP from orotate: step 1/2. In terms of biological role, catalyzes the transfer of a ribosyl phosphate group from 5-phosphoribose 1-diphosphate to orotate, leading to the formation of orotidine monophosphate (OMP). In Methanospirillum hungatei JF-1 (strain ATCC 27890 / DSM 864 / NBRC 100397 / JF-1), this protein is Orotate phosphoribosyltransferase.